Consider the following 459-residue polypeptide: tRNA modification GTPase MnmE (459 aa).

The (6S)-5-formyl-5,6,7,8-tetrahydrofolate site is built by Arg-20, Glu-85, and Arg-124. In terms of domain architecture, TrmE-type G spans 221–380 (GLSTVIIGRP…LEEAIQSLFY (160 aa)). Asn-231 serves as a coordination point for K(+). Residues 231–236 (NVGKSS), 250–256 (TDIPGTT), and 275–278 (DTAG) contribute to the GTP site. Mg(2+) is bound at residue Ser-235. Residues Thr-250, Ile-252, and Thr-255 each coordinate K(+). Thr-256 contacts Mg(2+). Lys-459 provides a ligand contact to (6S)-5-formyl-5,6,7,8-tetrahydrofolate.

This sequence belongs to the TRAFAC class TrmE-Era-EngA-EngB-Septin-like GTPase superfamily. TrmE GTPase family. In terms of assembly, homodimer. Heterotetramer of two MnmE and two MnmG subunits. It depends on K(+) as a cofactor.

It localises to the cytoplasm. In terms of biological role, exhibits a very high intrinsic GTPase hydrolysis rate. Involved in the addition of a carboxymethylaminomethyl (cmnm) group at the wobble position (U34) of certain tRNAs, forming tRNA-cmnm(5)s(2)U34. This chain is tRNA modification GTPase MnmE, found in Bacillus velezensis (strain DSM 23117 / BGSC 10A6 / LMG 26770 / FZB42) (Bacillus amyloliquefaciens subsp. plantarum).